The primary structure comprises 332 residues: Beta-ketoacyl-[acyl-carrier-protein] synthase III 2 (332 aa).

Residues cysteine 115 and histidine 252 contribute to the active site. The ACP-binding stretch occupies residues 253–257 (SANLR). The active site involves asparagine 282.

Belongs to the thiolase-like superfamily. FabH family. Homodimer.

It localises to the cytoplasm. The enzyme catalyses malonyl-[ACP] + acetyl-CoA + H(+) = 3-oxobutanoyl-[ACP] + CO2 + CoA. It functions in the pathway lipid metabolism; fatty acid biosynthesis. In terms of biological role, catalyzes the condensation reaction of fatty acid synthesis by the addition to an acyl acceptor of two carbons from malonyl-ACP. Catalyzes the first condensation reaction which initiates fatty acid synthesis and may therefore play a role in governing the total rate of fatty acid production. Possesses both acetoacetyl-ACP synthase and acetyl transacylase activities. Its substrate specificity determines the biosynthesis of branched-chain and/or straight-chain of fatty acids. The sequence is that of Beta-ketoacyl-[acyl-carrier-protein] synthase III 2 from Halalkalibacterium halodurans (strain ATCC BAA-125 / DSM 18197 / FERM 7344 / JCM 9153 / C-125) (Bacillus halodurans).